The following is a 465-amino-acid chain: 23S rRNA (uracil(1939)-C(5))-methyltransferase RlmD (465 aa).

The interval 1-20 (MSEAVPLSTPGASHAGAATD) is disordered. Residues 12 to 80 (ASHAGAATDR…PTYEQAQVVD (69 aa)) enclose the TRAM domain. Positions 93, 99, 102, and 181 each coordinate [4Fe-4S] cluster. S-adenosyl-L-methionine is bound by residues Q289, F318, N323, E339, N367, and D388. The active-site Nucleophile is C421.

This sequence belongs to the class I-like SAM-binding methyltransferase superfamily. RNA M5U methyltransferase family. RlmD subfamily.

It carries out the reaction uridine(1939) in 23S rRNA + S-adenosyl-L-methionine = 5-methyluridine(1939) in 23S rRNA + S-adenosyl-L-homocysteine + H(+). Catalyzes the formation of 5-methyl-uridine at position 1939 (m5U1939) in 23S rRNA. This chain is 23S rRNA (uracil(1939)-C(5))-methyltransferase RlmD, found in Burkholderia thailandensis (strain ATCC 700388 / DSM 13276 / CCUG 48851 / CIP 106301 / E264).